Reading from the N-terminus, the 264-residue chain is [LysW]-aminoadipate/[LysW]-glutamate kinase (264 aa).

Residues Gly-35 to Gly-36, Arg-62, and Asn-167 contribute to the substrate site.

This sequence belongs to the acetylglutamate kinase family. LysZ subfamily.

It localises to the cytoplasm. It carries out the reaction [amino-group carrier protein]-C-terminal-N-(1,4-dicarboxybutan-1-yl)-L-glutamine + ATP = [amino-group carrier protein]-C-terminal-N-(1-carboxy-5-phosphooxy-5-oxopentan-1-yl)-L-glutamine + ADP. The enzyme catalyses [amino-group carrier protein]-C-terminal-gamma-(L-glutamyl)-L-glutamate + ATP = [amino-group carrier protein]-C-terminal-gamma-(5-phospho-L-glutamyl)-L-glutamate + ADP. Its pathway is amino-acid biosynthesis; L-lysine biosynthesis via AAA pathway; L-lysine from L-alpha-aminoadipate (Thermus route): step 2/5. It participates in amino-acid biosynthesis; L-arginine biosynthesis. Involved in both the arginine and lysine biosynthetic pathways. Phosphorylates the LysW-bound precursors glutamate (for arginine biosynthesis), respectively alpha-aminoadipate (for lysine biosynthesis). The protein is [LysW]-aminoadipate/[LysW]-glutamate kinase of Saccharolobus islandicus (strain L.S.2.15 / Lassen #1) (Sulfolobus islandicus).